The sequence spans 358 residues: 3-isopropylmalate dehydrogenase (358 aa).

77 to 90 provides a ligand contact to NAD(+); the sequence is GPKWTNLPPDQQPE. The substrate site is built by arginine 98, arginine 108, arginine 137, and aspartate 226. Positions 226, 250, and 254 each coordinate Mg(2+). Residue 284-296 participates in NAD(+) binding; it reads GSAPDIAGKGIAN.

It belongs to the isocitrate and isopropylmalate dehydrogenases family. LeuB type 1 subfamily. As to quaternary structure, homodimer. Mg(2+) serves as cofactor. It depends on Mn(2+) as a cofactor.

The protein localises to the cytoplasm. It catalyses the reaction (2R,3S)-3-isopropylmalate + NAD(+) = 4-methyl-2-oxopentanoate + CO2 + NADH. It participates in amino-acid biosynthesis; L-leucine biosynthesis; L-leucine from 3-methyl-2-oxobutanoate: step 3/4. Its function is as follows. Catalyzes the oxidation of 3-carboxy-2-hydroxy-4-methylpentanoate (3-isopropylmalate) to 3-carboxy-4-methyl-2-oxopentanoate. The product decarboxylates to 4-methyl-2 oxopentanoate. This chain is 3-isopropylmalate dehydrogenase (leuB), found in Haemophilus influenzae (strain ATCC 51907 / DSM 11121 / KW20 / Rd).